The following is a 157-amino-acid chain: SsrA-binding protein (157 aa).

Positions 128 to 157 (LARGKKQHDKRAAEKERDWEREKQRVMRRG) are disordered. Residues 137-157 (KRAAEKERDWEREKQRVMRRG) are compositionally biased toward basic and acidic residues.

It belongs to the SmpB family.

The protein resides in the cytoplasm. Functionally, required for rescue of stalled ribosomes mediated by trans-translation. Binds to transfer-messenger RNA (tmRNA), required for stable association of tmRNA with ribosomes. tmRNA and SmpB together mimic tRNA shape, replacing the anticodon stem-loop with SmpB. tmRNA is encoded by the ssrA gene; the 2 termini fold to resemble tRNA(Ala) and it encodes a 'tag peptide', a short internal open reading frame. During trans-translation Ala-aminoacylated tmRNA acts like a tRNA, entering the A-site of stalled ribosomes, displacing the stalled mRNA. The ribosome then switches to translate the ORF on the tmRNA; the nascent peptide is terminated with the 'tag peptide' encoded by the tmRNA and targeted for degradation. The ribosome is freed to recommence translation, which seems to be the essential function of trans-translation. The sequence is that of SsrA-binding protein from Methylococcus capsulatus (strain ATCC 33009 / NCIMB 11132 / Bath).